The following is a 413-amino-acid chain: Aspartate aminotransferase, cytoplasmic (413 aa).

L-aspartate contacts are provided by Gly39 and Trp141. Ser149 bears the Phosphoserine mark. An L-aspartate-binding site is contributed by Asn195. Position 259 is an N6-(pyridoxal phosphate)lysine (Lys259). Arg387 lines the L-aspartate pocket.

Belongs to the class-I pyridoxal-phosphate-dependent aminotransferase family. In terms of assembly, homodimer. The cofactor is pyridoxal 5'-phosphate.

The protein localises to the cytoplasm. The catalysed reaction is L-aspartate + 2-oxoglutarate = oxaloacetate + L-glutamate. The enzyme catalyses L-cysteine + 2-oxoglutarate = 2-oxo-3-sulfanylpropanoate + L-glutamate. It carries out the reaction (2S)-2-aminobutanoate + 2-oxoglutarate = 2-oxobutanoate + L-glutamate. It catalyses the reaction 3-sulfino-L-alanine + 2-oxoglutarate = 3-sulfinopyruvate + L-glutamate. Its function is as follows. Biosynthesis of L-glutamate from L-aspartate or L-cysteine. Important regulator of levels of glutamate, the major excitatory neurotransmitter of the vertebrate central nervous system. Acts as a scavenger of glutamate in brain neuroprotection. The aspartate aminotransferase activity is involved in hepatic glucose synthesis during development and in adipocyte glyceroneogenesis. Using L-cysteine as substrate, regulates levels of mercaptopyruvate, an important source of hydrogen sulfide. Mercaptopyruvate is converted into H(2)S via the action of 3-mercaptopyruvate sulfurtransferase (3MST). Hydrogen sulfide is an important synaptic modulator and neuroprotectant in the brain. In addition, catalyzes (2S)-2-aminobutanoate, a by-product in the cysteine biosynthesis pathway. The chain is Aspartate aminotransferase, cytoplasmic from Homo sapiens (Human).